Consider the following 728-residue polypeptide: MDKETIKAHKISDEEYTQILEILGREPNLLELGVISAMWSEHCSYKSSKKYLNGFPTKAPWVIQGPGENAGVIDIGQGMSAVFKVESHNHPSFIEPFAGAATGVGGILRDVFTMGARVVAGLNSLKFGDIHNEKCGKHQKYLVKGVVNGISHYGNCMGVPTIGGECAFDECFNGNILVNAFALGICKSEDIFYAKAEGVGNPVIYVGSKTGRDGLGGAVMASDSFNEESKSLRPTVQIGDPFSEKLLMEACLELFKTDYIVGIQDMGAAGLTSSSFEMAGRSGSGMKLYLDKTPMRESGMTPYELMLSESQERMLICAKKGYEDKVIEIFKKWDLDAVVIGEVTNTEKMELFWHDELVGLIPIEPLSEKAPILNRPISEPKYLSEIKDYKFELKSSIQELFIQMLQNENINNKAFIYDQFDSSVQTNTIKADGKLGASVIRIKENGVSVAMAIECNSRLNYVNPKIGAALAVASAGRKVACTGAKPLAISDCLNYGNPQNPEVMWQFAQGCEGIKEACKELNTPVVSGNVSLYNETEGVSIYPSPTIVSVGVLEDANKTLKASFEKENLSVYLLGESLGEFGGSMVMKIQDKKVSGSLKELDYKAELALWDLLYKANQNSLLECANSVGIGGIAMTLAKMFAISSVGANLTSGFDDEKMIFDESASRAIVGLSKENEETFLTLTKEFGVKAYKLGVSTSQKHFKLDSIELNKAELDKLYFESFQEQIQ.

Residue His42 is part of the active site. 2 residues coordinate ATP: Tyr45 and Lys84. Glu86 provides a ligand contact to Mg(2+). Substrate is bound by residues 87-90 (SHNH) and Arg109. The active-site Proton acceptor is the His88. Position 110 (Asp110) interacts with Mg(2+). Gln237 contributes to the substrate binding site. Residue Asp265 coordinates Mg(2+). 309–311 (ESQ) is a binding site for substrate. Positions 491 and 528 each coordinate ATP. Residue Asn529 coordinates Mg(2+). Ser531 lines the substrate pocket.

The protein belongs to the FGAMS family. Monomer. Part of the FGAM synthase complex composed of 1 PurL, 1 PurQ and 2 PurS subunits.

The protein resides in the cytoplasm. The catalysed reaction is N(2)-formyl-N(1)-(5-phospho-beta-D-ribosyl)glycinamide + L-glutamine + ATP + H2O = 2-formamido-N(1)-(5-O-phospho-beta-D-ribosyl)acetamidine + L-glutamate + ADP + phosphate + H(+). It participates in purine metabolism; IMP biosynthesis via de novo pathway; 5-amino-1-(5-phospho-D-ribosyl)imidazole from N(2)-formyl-N(1)-(5-phospho-D-ribosyl)glycinamide: step 1/2. Part of the phosphoribosylformylglycinamidine synthase complex involved in the purines biosynthetic pathway. Catalyzes the ATP-dependent conversion of formylglycinamide ribonucleotide (FGAR) and glutamine to yield formylglycinamidine ribonucleotide (FGAM) and glutamate. The FGAM synthase complex is composed of three subunits. PurQ produces an ammonia molecule by converting glutamine to glutamate. PurL transfers the ammonia molecule to FGAR to form FGAM in an ATP-dependent manner. PurS interacts with PurQ and PurL and is thought to assist in the transfer of the ammonia molecule from PurQ to PurL. In Campylobacter jejuni subsp. doylei (strain ATCC BAA-1458 / RM4099 / 269.97), this protein is Phosphoribosylformylglycinamidine synthase subunit PurL.